The chain runs to 585 residues: uncharacterized protein (585 aa).

The protein to E.coli YejM.

This is an uncharacterized protein from Haemophilus influenzae (strain ATCC 51907 / DSM 11121 / KW20 / Rd).